The chain runs to 363 residues: Flagellar P-ring protein (363 aa).

The signal sequence occupies residues 1 to 20; that stretch reads MKLKLILAVAMLAFSLPSQA.

Belongs to the FlgI family. The basal body constitutes a major portion of the flagellar organelle and consists of four rings (L,P,S, and M) mounted on a central rod.

It localises to the periplasm. It is found in the bacterial flagellum basal body. In terms of biological role, assembles around the rod to form the L-ring and probably protects the motor/basal body from shearing forces during rotation. The chain is Flagellar P-ring protein from Shewanella sp. (strain MR-7).